The following is a 256-amino-acid chain: EF-hand calcium-binding domain-containing protein 4A (256 aa).

Basic residues predominate over residues 1-10 (MAHLGSRRRM). Positions 1 to 32 (MAHLGSRRRMSPGLRTRIAHRKAHRTPPSPLI) are disordered. 2 EF-hand domains span residues 41–69 (KAHE…QNEL) and 71–106 (LTPE…LLGV). Residues D84, S86, N88, Y90, and E95 each contribute to the Ca(2+) site. A coiled-coil region spans residues 190-235 (IRDVHHEKDTLEQALKRKETDHGREVRCLYEEMEQQIKIERERLLK).

It belongs to the EFCAB4 family.

The protein is EF-hand calcium-binding domain-containing protein 4A (cracr2b) of Xenopus tropicalis (Western clawed frog).